The primary structure comprises 273 residues: 2,3,4,5-tetrahydropyridine-2,6-dicarboxylate N-succinyltransferase (273 aa).

The substrate site is built by Arg-104 and Asp-141.

It belongs to the transferase hexapeptide repeat family. In terms of assembly, homotrimer.

The protein localises to the cytoplasm. The enzyme catalyses (S)-2,3,4,5-tetrahydrodipicolinate + succinyl-CoA + H2O = (S)-2-succinylamino-6-oxoheptanedioate + CoA. Its pathway is amino-acid biosynthesis; L-lysine biosynthesis via DAP pathway; LL-2,6-diaminopimelate from (S)-tetrahydrodipicolinate (succinylase route): step 1/3. The sequence is that of 2,3,4,5-tetrahydropyridine-2,6-dicarboxylate N-succinyltransferase from Blochmanniella pennsylvanica (strain BPEN).